Here is a 334-residue protein sequence, read N- to C-terminus: Phosphate acyltransferase (334 aa).

It belongs to the PlsX family. As to quaternary structure, homodimer. Probably interacts with PlsY.

It localises to the cytoplasm. It catalyses the reaction a fatty acyl-[ACP] + phosphate = an acyl phosphate + holo-[ACP]. Its pathway is lipid metabolism; phospholipid metabolism. In terms of biological role, catalyzes the reversible formation of acyl-phosphate (acyl-PO(4)) from acyl-[acyl-carrier-protein] (acyl-ACP). This enzyme utilizes acyl-ACP as fatty acyl donor, but not acyl-CoA. This is Phosphate acyltransferase from Clostridium kluyveri (strain NBRC 12016).